Consider the following 973-residue polypeptide: Vacuolar protein sorting-associated protein 18 homolog (973 aa).

N-acetylalanine is present on Ala2. Phosphoserine is present on residues Ser3, Ser11, and Ser13. Lys362 is subject to N6-acetyllysine. The stretch at 454 to 481 (EEIALKFLEARQEEALAEFLQRKLASLK) forms a coiled coil. A CHCR repeat occupies 618 to 772 (GSRLDARQLI…VVQEEEDVQT (155 aa)). Phosphoserine is present on Ser689. The stretch at 802–848 (KEAICSSLKAYNHHIQELQREMEEATASAQRIRRDLQELRGRYGTVE) forms a coiled coil. The RING-type zinc-finger motif lies at 853–947 (CATCDFPLLN…ELVAAECVYC (95 aa)). Residues 903–929 (GAAPPPAKGSARAKEAEGGAATAGPSR) are disordered. Phosphoserine is present on Ser912.

It belongs to the VPS18 family. As to quaternary structure, core component of at least two putative endosomal tethering complexes, the homotypic fusion and vacuole protein sorting (HOPS) complex and the class C core vacuole/endosome tethering (CORVET) complex. Their common core is composed of the class C Vps proteins VPS11, VPS16, VPS18 and VPS33A, which in HOPS further associates with VPS39 and VPS41 and in CORVET with VPS8 and TGFBRAP1. Interacts with RAB5C. Interacts with HOOK1. Interacts with STX7, MON1B. Associates with adaptor protein complex 3 (AP-3) and clathrin:AP-3 complexes. Interacts with SYNPO2. Interacts with PLEKHM1. As to expression, ubiquitous. Expression was highest in heart and low in lung.

Its subcellular location is the late endosome membrane. It is found in the lysosome membrane. The protein resides in the early endosome. It localises to the cytoplasmic vesicle. The protein localises to the autophagosome. Its subcellular location is the clathrin-coated vesicle. Functionally, plays a role in vesicle-mediated protein trafficking to lysosomal compartments including the endocytic membrane transport and autophagic pathways. Believed to act as a core component of the putative HOPS and CORVET endosomal tethering complexes which are proposed to be involved in the Rab5-to-Rab7 endosome conversion probably implicating MON1A/B, and via binding SNAREs and SNARE complexes to mediate tethering and docking events during SNARE-mediated membrane fusion. The HOPS complex is proposed to be recruited to Rab7 on the late endosomal membrane and to regulate late endocytic, phagocytic and autophagic traffic towards lysosomes. The CORVET complex is proposed to function as a Rab5 effector to mediate early endosome fusion probably in specific endosome subpopulations. Required for fusion of endosomes and autophagosomes with lysosomes. Involved in dendrite development of Pukinje cells. In Homo sapiens (Human), this protein is Vacuolar protein sorting-associated protein 18 homolog.